The sequence spans 368 residues: Mitogen-activated protein kinase KSS1 (368 aa).

The 301-residue stretch at 13–313 (YKLVDLIGEG…AAEALRHPYL (301 aa)) folds into the Protein kinase domain. Residues 19 to 27 (IGEGAYGTV) and K42 contribute to the ATP site. The Proton acceptor role is filled by D143. T183 carries the phosphothreonine modification. A TXY motif is present at residues 183 to 185 (TEY). Y185 is subject to Phosphotyrosine.

It belongs to the protein kinase superfamily. Ser/Thr protein kinase family. MAP kinase subfamily. HOG1 sub-subfamily. As to quaternary structure, in the nucleus, KSS1 forms a complex with DIG1, DIG2 and STE12; in contrast to FUS3 the interaction of KSS1 with STE12 does not depend on DIG1 and DIG2. Phosphorylated KSS1 shows reduced interaction with STE12. During pheromone activation and phosphorylation, KSS1 forms a membrane-associated complex with the scaffold protein STE5, the MAPKK STE7, the MAPKKK STE11, and the G-protein beta subunit GBB/STE4; interacting directly with POF1, STE7 and STE5 proteins. The cofactor is Mg(2+). Dually phosphorylated on Thr-183 and Tyr-185 by STE7 in response to pheromone or carbon/nitrogen limitation, which activates the enzyme. Activated FUS3 down-regulates KSS1 phosphorylation.

It is found in the nucleus. The protein localises to the cytoplasm. It localises to the periplasm. The enzyme catalyses L-seryl-[protein] + ATP = O-phospho-L-seryl-[protein] + ADP + H(+). The catalysed reaction is L-threonyl-[protein] + ATP = O-phospho-L-threonyl-[protein] + ADP + H(+). With respect to regulation, activated by tyrosine and threonine phosphorylation after pheromone treatment or carbon/nitrogen limitation. Together with closely related FUS3, KSS1 is the final kinase in the signal transduction cascade regulating activation/repression of the mating and filamentation pathways, induced by pheromone and nitrogen/carbon limitation, respectively. Phosphorylated KSS1 activates both pathways, whereas activated FUS3 activates the mating but suppresses the filamentation pathway. KSS1 activity is down-regulated by FUS3 during pheromone induction to prevent inappropriate activation of the filamentation pathway. During induction of filamentation, KSS1 activates the transcription factor STE12 resulting in its binding to and activation of filamentation specific genes. Non-activated KSS1 has a kinase-independent repressive effect on STE12 transcriptional activity, that is mediated by direct binding to STE12 and depends on the presence of DIG1 and DIG2, and that is required for the suppression of filamentation under normal growth conditions. SSN3/SRB10 contributes further to the suppression of filamentation under these conditions by reducing STE12 stability independent of KSS1. FUS3 can partially compensate for the lack of KSS1 but filamentation becomes constitutively induced at a low level in the absence of any signal. KSS1 phosphorylates STE7, STE5, FAR1, DIG1, DIG2, STE12, and SST2. This is Mitogen-activated protein kinase KSS1 (KSS1) from Saccharomyces cerevisiae (strain ATCC 204508 / S288c) (Baker's yeast).